An 895-amino-acid chain; its full sequence is Zinc finger protein 574 (895 aa).

3 consecutive C2H2-type zinc fingers follow at residues 16-38 (YVCSECNQLYGSLEEVLMHQNSH), 76-98 (YQCLECGQLLMSPSQLLEHQELH), and 126-148 (YECVDCKALFASQELWLNHRQTH). Residue Ser164 is modified to Phosphoserine. The segment at 214–236 (YKCSECSQLFQLPADFLEHQATH) adopts a C2H2-type 4 zinc-finger fold. The segment at 239-301 (APVPESQEPA…RARRNNSGEA (63 aa)) is disordered. Residues 247 to 257 (PALQQEVQASS) are compositionally biased toward polar residues. Residues 274–287 (HSYELRNGEAIGRD) show a composition bias toward basic and acidic residues. Position 298 is a phosphoserine (Ser298). 4 C2H2-type zinc fingers span residues 309 to 331 (LFCSACDQLFLSPHQLQQHLRSH), 336 to 358 (FKCPLCSRVFPSPSSLDQHLGDH), 364 to 386 (FLCVDCGLAFGTEALLLAHRRAH), and 392 to 413 (HSCPCGKTFVNLTKFLYHRRTH). The segment at 434 to 460 (FPEPAPAETGEPEAPEPPVSEETSAGP) is disordered. 6 C2H2-type zinc fingers span residues 466 to 489 (YRCLLCSREFGKALQLTRHQRFVH), 495 to 517 (HKCSICGKMFKKKSHVRNHLRTH), 523 to 545 (FPCPDCSKPFNSPANLARHRLTH), 551 to 573 (YRCGDCGKAFTQSSTLRQHRLVH), 579 to 601 (YRCQECGVRFHRPYRLLMHRYHH), and 607 to 630 (YKCRECPRSFLLRRLLEVHQLVVH). A C2H2-type 15; degenerate zinc finger spans residues 636–659 (HRCPSCGAAFPSSLRLREHRCAAA). The C2H2-type 16 zinc-finger motif lies at 667–689 (FECGTCGKKVGSAARLQAHEAAH). A disordered region spans residues 687–732 (AAHAAAGPGEVLAKEPPAPRAPRATRAPVASPAALGGTATASPAPA). Low complexity predominate over residues 707 to 731 (APRATRAPVASPAALGGTATASPAP). A Phosphoserine modification is found at Ser717. A Phosphothreonine modification is found at Thr724. Ser728 is subject to Phosphoserine. 4 consecutive C2H2-type zinc fingers follow at residues 737–759 (LECSECKKLFSTETSLQVHRRIH), 765–787 (YPCPDCGKAFRQSTHLKDHRRLH), 793–815 (FACEVCGKAFAISMRLAEHRRIH), and 821–843 (YSCPDCGKSYRSFSNLWKHRKTH). Arg831 is subject to Asymmetric dimethylarginine.

The protein belongs to the krueppel C2H2-type zinc-finger protein family.

It localises to the nucleus. In terms of biological role, may be involved in transcriptional regulation. The chain is Zinc finger protein 574 (ZNF574) from Pongo abelii (Sumatran orangutan).